Consider the following 509-residue polypeptide: Cytochrome P450 monooxygenase aba1 (509 aa).

An N-terminal signal peptide occupies residues M1–A31. Residue N402 is glycosylated (N-linked (GlcNAc...) asparagine). A heme-binding site is contributed by C451. N462 carries an N-linked (GlcNAc...) asparagine glycan.

Belongs to the cytochrome P450 family. It depends on heme as a cofactor.

Its pathway is hormone biosynthesis. Functionally, cytochrome P450 monooxygenase; part of the gene cluster that mediates the biosynthesis of abscisic acid (ABA), a phytohormone that acts antagonistically toward salicylic acid (SA), jasmonic acid (JA) and ethylene (ETH) signaling, to impede plant defense responses. The first step of the pathway catalyzes the reaction from farnesyl diphosphate to alpha-ionylideneethane performed by the alpha-ionylideneethane synthase aba3 via a three-step reaction mechanism involving 2 neutral intermediates, beta-farnesene and allofarnesene. The cytochrome P450 monooxygenase aba1 might then be involved in the conversion of alpha-ionylideneethane to alpha-ionylideneacetic acid. Alpha-ionylideneacetic acid is further converted to abscisic acid in 2 steps involving the cytochrome P450 monooxygenase aba2 and the short-chain dehydrogenase/reductase aba4, via the intermediates 1'-deoxy-ABA or 1',4'-trans-diol-ABA, depending on the order of action of these 2 enzymes. Aba2 is responsible for the hydroxylation of carbon atom C-1' and aba4 might be involved in the oxidation of the C-4' carbon atom. The protein is Cytochrome P450 monooxygenase aba1 (aba1) of Botryotinia fuckeliana (strain B05.10) (Noble rot fungus).